The chain runs to 549 residues: Glucose-6-phosphate isomerase (549 aa).

Residue glutamate 355 is the Proton donor of the active site. Residues histidine 386 and lysine 514 contribute to the active site.

Belongs to the GPI family.

The protein resides in the cytoplasm. The enzyme catalyses alpha-D-glucose 6-phosphate = beta-D-fructose 6-phosphate. Its pathway is carbohydrate biosynthesis; gluconeogenesis. It participates in carbohydrate degradation; glycolysis; D-glyceraldehyde 3-phosphate and glycerone phosphate from D-glucose: step 2/4. In terms of biological role, catalyzes the reversible isomerization of glucose-6-phosphate to fructose-6-phosphate. This Salmonella enteritidis PT4 (strain P125109) protein is Glucose-6-phosphate isomerase.